The primary structure comprises 290 residues: Ribosomal large subunit pseudouridine synthase B (290 aa).

An S4 RNA-binding domain is found at Glu-3–Pro-75. The Nucleophile role is filled by Asp-110. The tract at residues Ser-251–Gly-290 is disordered.

The protein belongs to the pseudouridine synthase RsuA family.

The catalysed reaction is uridine(2605) in 23S rRNA = pseudouridine(2605) in 23S rRNA. In terms of biological role, responsible for synthesis of pseudouridine from uracil-2605 in 23S ribosomal RNA. This Shigella flexneri protein is Ribosomal large subunit pseudouridine synthase B (rluB).